We begin with the raw amino-acid sequence, 941 residues long: Putative helicase 121R (941 aa).

A coiled-coil region spans residues 285-323 (LKQELKDIEGENSETIKRNLKDAKDLLKILNKKRANEYN). Residues 492–514 (DDSGRDSEEDSQEEEVSSSQEQL) are disordered. Over residues 498-507 (SEEDSQEEEV) the composition is skewed to acidic residues. The SF3 helicase domain maps to 609 to 791 (EEVLELYNFL…FVAREKCPET (183 aa)). 653–660 (GNGNNGKS) is an ATP binding site.

Belongs to the IIV-6 184L family.

The polypeptide is Putative helicase 121R (Invertebrate iridescent virus 3 (IIV-3)).